We begin with the raw amino-acid sequence, 188 residues long: E3 ubiquitin-protein ligase RNF183 (188 aa).

The Cytoplasmic segment spans residues 1-157 (MAEQQGREPE…RECFRNPHFR (157 aa)). The RING-type zinc-finger motif lies at 11–58 (CPVCWNPFNNTFHTPKVLDCCHSFCVECLAHISLVTPTRRRLLCPLCR). The chain crosses the membrane as a helical; Anchor for type IV membrane protein span at residues 158–178 (IFAYMMAVILCGTVLFIFSIF). At 179–188 (CTRRFFWGVG) the chain is on the lumenal side.

In terms of assembly, interacts with FATE1. Interacts with SEC16A. Interacts with BCL2L1. In terms of processing, autoubiquitinated (in vitro).

It is found in the endoplasmic reticulum membrane. It localises to the endoplasmic reticulum. The protein resides in the golgi apparatus. Its subcellular location is the cis-Golgi network membrane. The protein localises to the lysosome. It catalyses the reaction S-ubiquitinyl-[E2 ubiquitin-conjugating enzyme]-L-cysteine + [acceptor protein]-L-lysine = [E2 ubiquitin-conjugating enzyme]-L-cysteine + N(6)-ubiquitinyl-[acceptor protein]-L-lysine.. It participates in protein modification; protein ubiquitination. Functionally, acts as an E3 ubiquitin ligase catalyzing the covalent attachment of ubiquitin moieties onto substrate proteins. Triggers apoptosis in response to prolonged ER stress by mediating the polyubiquitination and subsequent proteasomal degradation of BCL2L1. May collaborate with FATE1 to restrain BIK protein levels thus regulating apoptotic signaling. This is E3 ubiquitin-protein ligase RNF183 (RNF183) from Bos taurus (Bovine).